The sequence spans 276 residues: 4-hydroxy-tetrahydrodipicolinate reductase (276 aa).

An NAD(+)-binding site is contributed by 16-21; it reads GALGKM. Lys-44 is an NADP(+) binding site. NAD(+) contacts are provided by residues 109–111 and 135–138; these read GTT and APNF. The Proton donor/acceptor role is filled by His-165. Position 166 (His-166) interacts with (S)-2,3,4,5-tetrahydrodipicolinate. Lys-169 (proton donor) is an active-site residue. 175–176 is a binding site for (S)-2,3,4,5-tetrahydrodipicolinate; it reads GT.

The protein belongs to the DapB family.

The protein localises to the cytoplasm. The catalysed reaction is (S)-2,3,4,5-tetrahydrodipicolinate + NAD(+) + H2O = (2S,4S)-4-hydroxy-2,3,4,5-tetrahydrodipicolinate + NADH + H(+). The enzyme catalyses (S)-2,3,4,5-tetrahydrodipicolinate + NADP(+) + H2O = (2S,4S)-4-hydroxy-2,3,4,5-tetrahydrodipicolinate + NADPH + H(+). The protein operates within amino-acid biosynthesis; L-lysine biosynthesis via DAP pathway; (S)-tetrahydrodipicolinate from L-aspartate: step 4/4. Functionally, catalyzes the conversion of 4-hydroxy-tetrahydrodipicolinate (HTPA) to tetrahydrodipicolinate. The sequence is that of 4-hydroxy-tetrahydrodipicolinate reductase from Thermosynechococcus vestitus (strain NIES-2133 / IAM M-273 / BP-1).